The following is a 161-amino-acid chain: Phosphopantetheine adenylyltransferase (161 aa).

T10 is a binding site for substrate. Residues 10-11 (TF) and H18 contribute to the ATP site. The substrate site is built by K42, L74, and R88. ATP is bound by residues 89–91 (GVR), E99, and 123–129 (YIHISST).

Belongs to the bacterial CoaD family. In terms of assembly, homohexamer. The cofactor is Mg(2+).

The protein resides in the cytoplasm. The catalysed reaction is (R)-4'-phosphopantetheine + ATP + H(+) = 3'-dephospho-CoA + diphosphate. It functions in the pathway cofactor biosynthesis; coenzyme A biosynthesis; CoA from (R)-pantothenate: step 4/5. Its function is as follows. Reversibly transfers an adenylyl group from ATP to 4'-phosphopantetheine, yielding dephospho-CoA (dPCoA) and pyrophosphate. The protein is Phosphopantetheine adenylyltransferase of Aquifex aeolicus (strain VF5).